Consider the following 560-residue polypeptide: Glutamine--tRNA ligase (560 aa).

Residues 36 to 46 (PEPNGFAHIGH) carry the 'HIGH' region motif. ATP contacts are provided by residues 37–39 (EPN) and 43–49 (HIGHAKA). Residues aspartate 69 and tyrosine 214 each contribute to the L-glutamine site. 263–264 (RL) contacts ATP. A 'KMSKS' region motif is present at residues 270–274 (LTSKR).

Belongs to the class-I aminoacyl-tRNA synthetase family. In terms of assembly, monomer.

It localises to the cytoplasm. It carries out the reaction tRNA(Gln) + L-glutamine + ATP = L-glutaminyl-tRNA(Gln) + AMP + diphosphate. The protein is Glutamine--tRNA ligase of Chromobacterium violaceum (strain ATCC 12472 / DSM 30191 / JCM 1249 / CCUG 213 / NBRC 12614 / NCIMB 9131 / NCTC 9757 / MK).